A 619-amino-acid chain; its full sequence is Genetic interactor of prohibitins 3, mitochondrial (619 aa).

A mitochondrion-targeting transit peptide spans 1-55; sequence MLKAQIQTGLQLLQRAAVSHMRPSSCTSMLMRMRVHLAPRALQSQRSLSSSEFSP. The CP-type G domain maps to 162–372; it reads VAAVSDVMHS…IYDVPGFSSA (211 aa).

It belongs to the TRAFAC class YlqF/YawG GTPase family. GEP3 subfamily.

The protein localises to the mitochondrion. Functionally, may be involved in the mitochondrial lipid metabolism. The sequence is that of Genetic interactor of prohibitins 3, mitochondrial (GEP3) from Clavispora lusitaniae (strain ATCC 42720) (Yeast).